Consider the following 757-residue polypeptide: RNA exonuclease 3 (757 aa).

Disordered regions lie at residues 56–259 and 474–590; these read VKRE…AEHL and ESLD…CDQA. Positions 120-132 are enriched in basic and acidic residues; the sequence is EGGRAEGAEKKEF. Composition is skewed to polar residues over residues 145 to 172, 202 to 223, and 230 to 240; these read TPHA…SSVS, QPSS…SSPK, and MTTSASPSQSR. Composition is skewed to low complexity over residues 244–253 and 474–502; these read RNTSASPSSS and ESLD…KTAS. A compositionally biased stretch (polar residues) spans 503-516; that stretch reads RPASTPTKSLTSSL. Composition is skewed to basic and acidic residues over residues 543–557 and 565–581; these read REPD…RGIG and SQER…RVRE. Positions 597–751 constitute an Exonuclease domain; the sequence is VVAVDCEMLY…EDALAALDVV (155 aa).

The protein belongs to the REXO1/REXO3 family.

The protein localises to the cytoplasm. Its subcellular location is the nucleus. 3' to 5' exoribonuclease required for proper 3' end maturation of MRP RNA and of the U5L snRNA. This is RNA exonuclease 3 (REX3) from Yarrowia lipolytica (strain CLIB 122 / E 150) (Yeast).